A 445-amino-acid polypeptide reads, in one-letter code: MVPPIIYKYKRRKDRRLGRDDDSSVMMTRRRPDSDFIEVSDENRSFALFKEDDEKNRDLGLVDDGSTNLVLQCHDDGCSLEKDNSNSLDDLFSGFVYKGVRRRKRDDFGSITTSNLVSPQIADDDDDSVSDSHIERQECSEFHVEVRRVSPYFQGSTVSQQSKEGCDSDSVCSKEGCSKVQAKVPRVSPYFQASTISQCDSDIVSSSQSGRNYRKGSSKRQVKVRRVSPYFQESTVSEQPNQAPKGLRNYFKVVKVSRYFHADGIQVNESQKEKSRNVRKTPIVSPVLSLSQKTDDVYLRKTPDNTWVPPRSPCNLLQEDHWHDPWRVLVICMLLNKTSGAQTRGVISDLFGLCTDAKTATEVKEEEIENLIKPLGLQKKRTKMIQRLSLEYLQESWTHVTQLHGVGKYAADAYAIFCNGNWDRVKPNDHMLNYYWDYLRIRYKL.

Residue aspartate 429 is part of the active site.

As to expression, isoform 1 and isoform 4: Expressed in leaves and flowers, but not in roots or stems.

The protein resides in the nucleus. Monofunctional DNA glycosylase targeting U:G and T:G mispairs. Excises uracil derivatives and exhibits a preference for a CpG sequence context, irrespective of the methylation status of the complementary strand. The activity follows a biphasic kinetics, with an initial burst of product accumulation followed by a slower phase. Specifically binds its reaction product. Triggers the base excision repair (BER) pathway. The protein is Methyl-CpG-binding domain protein 4-like protein of Arabidopsis thaliana (Mouse-ear cress).